Here is a 414-residue protein sequence, read N- to C-terminus: Dual-specificity RNA methyltransferase RlmN (414 aa).

Residues 1 to 20 are compositionally biased toward low complexity; it reads MMSTPETATEATAPEAAPAP. Positions 1–24 are disordered; sequence MMSTPETATEATAPEAAPAPSLGA. The Proton acceptor role is filled by E129. In terms of domain architecture, Radical SAM core spans 135-385; sequence ESDRGTLCVS…VRTPRGRDIL (251 aa). A disulfide bridge connects residues C142 and C388. [4Fe-4S] cluster is bound by residues C149, C153, and C156. S-adenosyl-L-methionine-binding positions include 214–215, S246, 268–270, and N345; these read GE and SLH. Catalysis depends on C388, which acts as the S-methylcysteine intermediate.

The protein belongs to the radical SAM superfamily. RlmN family. [4Fe-4S] cluster is required as a cofactor.

Its subcellular location is the cytoplasm. The catalysed reaction is adenosine(2503) in 23S rRNA + 2 reduced [2Fe-2S]-[ferredoxin] + 2 S-adenosyl-L-methionine = 2-methyladenosine(2503) in 23S rRNA + 5'-deoxyadenosine + L-methionine + 2 oxidized [2Fe-2S]-[ferredoxin] + S-adenosyl-L-homocysteine. It catalyses the reaction adenosine(37) in tRNA + 2 reduced [2Fe-2S]-[ferredoxin] + 2 S-adenosyl-L-methionine = 2-methyladenosine(37) in tRNA + 5'-deoxyadenosine + L-methionine + 2 oxidized [2Fe-2S]-[ferredoxin] + S-adenosyl-L-homocysteine. In terms of biological role, specifically methylates position 2 of adenine 2503 in 23S rRNA and position 2 of adenine 37 in tRNAs. m2A2503 modification seems to play a crucial role in the proofreading step occurring at the peptidyl transferase center and thus would serve to optimize ribosomal fidelity. This chain is Dual-specificity RNA methyltransferase RlmN, found in Xanthobacter autotrophicus (strain ATCC BAA-1158 / Py2).